Consider the following 350-residue polypeptide: S-adenosylmethionine:tRNA ribosyltransferase-isomerase (350 aa).

This sequence belongs to the QueA family. In terms of assembly, monomer.

It localises to the cytoplasm. The enzyme catalyses 7-aminomethyl-7-carbaguanosine(34) in tRNA + S-adenosyl-L-methionine = epoxyqueuosine(34) in tRNA + adenine + L-methionine + 2 H(+). Its pathway is tRNA modification; tRNA-queuosine biosynthesis. Transfers and isomerizes the ribose moiety from AdoMet to the 7-aminomethyl group of 7-deazaguanine (preQ1-tRNA) to give epoxyqueuosine (oQ-tRNA). The chain is S-adenosylmethionine:tRNA ribosyltransferase-isomerase from Aliivibrio salmonicida (strain LFI1238) (Vibrio salmonicida (strain LFI1238)).